The sequence spans 226 residues: Ribonuclease 3 (226 aa).

An RNase III domain is found at Leu7–Asp129. Glu42 contributes to the Mg(2+) binding site. Asp46 is a catalytic residue. Mg(2+)-binding residues include Asp115 and Glu118. Glu118 is a catalytic residue. Residues Asp156–Lys226 enclose the DRBM domain.

It belongs to the ribonuclease III family. In terms of assembly, homodimer. Mg(2+) is required as a cofactor.

Its subcellular location is the cytoplasm. The catalysed reaction is Endonucleolytic cleavage to 5'-phosphomonoester.. Digests double-stranded RNA. Involved in the processing of primary rRNA transcript to yield the immediate precursors to the large and small rRNAs (23S and 16S). Processes some mRNAs, and tRNAs when they are encoded in the rRNA operon. Processes pre-crRNA and tracrRNA of type II CRISPR loci if present in the organism. This Shewanella frigidimarina (strain NCIMB 400) protein is Ribonuclease 3.